We begin with the raw amino-acid sequence, 301 residues long: GTPase Era (301 aa).

The region spanning K4–P173 is the Era-type G domain. The tract at residues G12–S19 is G1. G12–S19 is a GTP binding site. Residues N38–K42 are G2. The G3 stretch occupies residues D64–G67. Residues D64–L68 and S122–D125 each bind GTP. The G4 stretch occupies residues S122–D125. The interval L152 to A154 is G5. In terms of domain architecture, KH type-2 spans L204–K280.

Belongs to the TRAFAC class TrmE-Era-EngA-EngB-Septin-like GTPase superfamily. Era GTPase family. In terms of assembly, monomer.

Its subcellular location is the cytoplasm. The protein resides in the cell inner membrane. Functionally, an essential GTPase that binds both GDP and GTP, with rapid nucleotide exchange. Plays a role in 16S rRNA processing and 30S ribosomal subunit biogenesis and possibly also in cell cycle regulation and energy metabolism. The protein is GTPase Era of Helicobacter pylori (strain G27).